Reading from the N-terminus, the 230-residue chain is Aquaporin Z (230 aa).

2 helical membrane-spanning segments follow: residues 9–29 and 35–55; these read AELI…VLAA and IGVL…AFAI. The NPA 1 signature appears at 64 to 66; that stretch reads NPA. 3 helical membrane passes run 83–103, 131–151, and 160–180; these read LPYV…IYLI, LGAG…VIMG, and GFAP…SIPV. The NPA 2 signature appears at 186–188; the sequence is NPA. A helical membrane pass occupies residues 194 to 214; sequence ALFVGGWALQQLWLFWVAPLI.

The protein belongs to the MIP/aquaporin (TC 1.A.8) family. In terms of assembly, homotetramer.

It localises to the cell inner membrane. It catalyses the reaction H2O(in) = H2O(out). In terms of biological role, channel that permits osmotically driven movement of water in both directions. It is involved in the osmoregulation and in the maintenance of cell turgor during volume expansion in rapidly growing cells. It mediates rapid entry or exit of water in response to abrupt changes in osmolarity. In Pseudomonas putida (strain ATCC 47054 / DSM 6125 / CFBP 8728 / NCIMB 11950 / KT2440), this protein is Aquaporin Z.